Consider the following 427-residue polypeptide: Trigger factor (427 aa).

The 86-residue stretch at 163–248 (GDTVVIDFVG…IHEVKEKEVP (86 aa)) folds into the PPIase FKBP-type domain.

This sequence belongs to the FKBP-type PPIase family. Tig subfamily.

It localises to the cytoplasm. It catalyses the reaction [protein]-peptidylproline (omega=180) = [protein]-peptidylproline (omega=0). Involved in protein export. Acts as a chaperone by maintaining the newly synthesized protein in an open conformation. Functions as a peptidyl-prolyl cis-trans isomerase. This is Trigger factor from Streptococcus sanguinis (strain SK36).